Here is a 210-residue protein sequence, read N- to C-terminus: MTQQAVLALLLTLAGILPGPLDAQDVHQSPRLTIASEGDSVNITCSTRGHLEGILMKKIWPQAYNVIYFEDRQEPTVDRTFSGRINFSGSQKNLTITISSLQLADTGDYTCEAVRKVSARGLFTTVVVKEKSSQEAYRSQEPLQTSFSFPAAIAVGFFFTGLLLGVVCSMLRKIQIKKLCASGIKESPCVVYEDMSYSNRKTPCIPNQYQ.

The N-terminal stretch at 1–23 is a signal peptide; the sequence is MTQQAVLALLLTLAGILPGPLDA. The region spanning 24 to 129 is the Ig-like domain; it reads QDVHQSPRLT…RGLFTTVVVK (106 aa). The Extracellular portion of the chain corresponds to 24–150; it reads QDVHQSPRLT…EPLQTSFSFP (127 aa). N-linked (GlcNAc...) asparagine glycosylation is found at Asn-42, Asn-86, and Asn-93. Residues Cys-45 and Cys-111 are joined by a disulfide bond. Residues 151–171 form a helical membrane-spanning segment; that stretch reads AAIAVGFFFTGLLLGVVCSML. Residue Cys-168 is the site of S-palmitoyl cysteine attachment. At 172-210 the chain is on the cytoplasmic side; the sequence is RKIQIKKLCASGIKESPCVVYEDMSYSNRKTPCIPNQYQ.

Interacts with SECTM1.

The protein resides in the membrane. Functionally, transmembrane glycoprotein expressed by T-cells and natural killer (NK) cells and their precursors. Plays a costimulatory role in T-cell activation upon binding to its ligand K12/SECTM1. In turn, mediates the production of cytokines such as IL-2. On resting NK-cells, CD7 activation results in a significant induction of gamma-interferon levels. This Mus musculus (Mouse) protein is T-cell antigen CD7 (Cd7).